The following is a 249-amino-acid chain: Neurotrophic factor BDNF precursor form (249 aa).

The N-terminal stretch at 1 to 18 is a signal peptide; it reads MTILFLTMVISYFGCMKA. A propeptide spanning residues 19 to 130 is cleaved from the precursor; it reads APMKEANVHG…AANMSMRVRR (112 aa). The N-linked (GlcNAc...) asparagine glycan is linked to Asn-123. 3 disulfide bridges follow: Cys-143–Cys-210, Cys-188–Cys-239, and Cys-198–Cys-241.

Belongs to the NGF-beta family. Monomers and homodimers. Binds to NTRK2/TRKB. Can form heterodimers with other neurotrophin family members, such as NTF3 and NTF4 (in vitro), but the physiological relevance of this is not clear. BDNF precursor form: interacts with the heterodimer formed by NGFR and SORCS2. Mature BDNF has much lower affinity for the heterodimer formed by NGFR and SORCS2. Post-translationally, N-glycosylated and glycosulfated, contrary to mature BDNF. Mature BDNF is produced by proteolytic removal of the propeptide, catalyzed by a FURIN family member. In addition, the precursor form is proteolytically cleaved within the propeptide, but this is not an obligatory intermediate for the production of mature BDNF. Can be converted into mature BDNF by plasmin (PLG).

It localises to the secreted. In terms of biological role, important signaling molecule that activates signaling cascades downstream of NTRK2. During development, promotes the survival and differentiation of selected neuronal populations of the peripheral and central nervous systems. Participates in axonal growth, pathfinding and in the modulation of dendritic growth and morphology. Major regulator of synaptic transmission and plasticity at adult synapses in many regions of the CNS. The versatility of BDNF is emphasized by its contribution to a range of adaptive neuronal responses including long-term potentiation (LTP), long-term depression (LTD), certain forms of short-term synaptic plasticity, as well as homeostatic regulation of intrinsic neuronal excitability. Its function is as follows. Important signaling molecule that activates signaling cascades downstream of NTRK2. Activates signaling cascades via the heterodimeric receptor formed by NGFR and SORCS2. Signaling via NGFR and SORCS2 plays a role in synaptic plasticity and long-term depression (LTD). Binding to NGFR and SORCS2 promotes neuronal apoptosis. Promotes neuronal growth cone collapse. The sequence is that of Neurotrophic factor BDNF precursor form (Bdnf) from Rattus norvegicus (Rat).